We begin with the raw amino-acid sequence, 515 residues long: Maturase K (515 aa).

Belongs to the intron maturase 2 family. MatK subfamily.

Its subcellular location is the plastid. It localises to the chloroplast. Usually encoded in the trnK tRNA gene intron. Probably assists in splicing its own and other chloroplast group II introns. This is Maturase K from Alpinia zerumbet (Shell ginger).